The chain runs to 104 residues: DNA-directed RNA polymerase subunit omega (104 aa).

The tract at residues 60–104 is disordered; that stretch reads VIHPDPEGKREAVRRRAEEERLRKEEEERKIKEQIAKEKEEGEKI. The segment covering 63–104 has biased composition (basic and acidic residues); sequence PDPEGKREAVRRRAEEERLRKEEEERKIKEQIAKEKEEGEKI.

Belongs to the RNA polymerase subunit omega family. As to quaternary structure, the RNAP catalytic core consists of 2 alpha, 1 beta, 1 beta' and 1 omega subunit. When a sigma factor is associated with the core the holoenzyme is formed, which can initiate transcription.

The catalysed reaction is RNA(n) + a ribonucleoside 5'-triphosphate = RNA(n+1) + diphosphate. In terms of biological role, promotes RNA polymerase assembly. Latches the N- and C-terminal regions of the beta' subunit thereby facilitating its interaction with the beta and alpha subunits. The sequence is that of DNA-directed RNA polymerase subunit omega from Streptococcus sanguinis (strain SK36).